Consider the following 709-residue polypeptide: Copper amine oxidase vicK1 (709 aa).

Residues methionine 1–glutamine 20 form the signal peptide. Aspartate 365 (proton acceptor) is an active-site residue. Cysteine 383 and cysteine 408 are joined by a disulfide. Tyrosine 448 (schiff-base intermediate with substrate; via topaquinone) is an active-site residue. Tyrosine 448 bears the 2',4',5'-topaquinone mark. The Cu cation site is built by histidine 496 and histidine 498. Residues aspartate 505, leucine 506, aspartate 507, glutamate 548, phenylalanine 641, glutamate 645, aspartate 651, and leucine 652 each contribute to the Ca(2+) site. Histidine 662 is a binding site for Cu cation.

This sequence belongs to the copper/topaquinone oxidase family. As to quaternary structure, homodimer; disulfide-linked. The cofactor is Cu cation. Requires Ca(2+) as cofactor. L-topaquinone serves as cofactor. Post-translationally, topaquinone (TPQ) is generated by copper-dependent autoxidation of a specific tyrosyl residue.

Its pathway is mycotoxin biosynthesis. In terms of biological role, copper amine oxidase, part of the gene cluster that mediates the biosynthesis of the secondary metabolite victorin, the molecular basis for Victoria blight of oats. Within the pathway, vicK1 catalyzes the oxidative deamination of the N-terminal glycyl moiety of the hexapeptides in order to produce the active glyoxylate form victorins. The pathway starts with the processing of the precursor vicA1 by several endopeptidases including kexin proteases as well as the cluster-specific S28 family peptidases vicPa and vicPb to produce 7 identical copies of the hexapeptide Gly-Leu-Lys-Leu-Ala-Phe. After being excised from the precursor peptide, the core peptides are cyclized and modified post-translationally by enzymes encoded within the gene cluster. The ustYa family oxidase vicYb is required for the formation of the macrocycle in victorin and the copper amine oxidases (CAOs) vicK1 and vicK2 are responsible for converting victorin to the active form by oxidizing the N-terminal glycyl residue in the peptides to glyoxylate. Relaxed substrate specificity of enzymes in the victorin biosynthetic pathway results in a metabolic grid that produces a set of analogs including victorinines B, C, E or HV-toxin M. The protein is Copper amine oxidase vicK1 of Bipolaris victoriae (strain FI3) (Victoria blight of oats agent).